Reading from the N-terminus, the 309-residue chain is Elongation factor Ts (309 aa).

Residues 82–85 (TDFV) form an involved in Mg(2+) ion dislocation from EF-Tu region.

Belongs to the EF-Ts family.

It localises to the cytoplasm. Its function is as follows. Associates with the EF-Tu.GDP complex and induces the exchange of GDP to GTP. It remains bound to the aminoacyl-tRNA.EF-Tu.GTP complex up to the GTP hydrolysis stage on the ribosome. The protein is Elongation factor Ts of Rickettsia typhi (strain ATCC VR-144 / Wilmington).